Reading from the N-terminus, the 436-residue chain is Bystin (436 aa).

Residues 1 to 105 (MPKLKVTRGA…GSDEEDEEWP (105 aa)) form a disordered region. Position 54 is a phosphoserine (S54). Residues 70–86 (TEHATGDRPAKPRERAT) are compositionally biased toward basic and acidic residues. Acidic residues predominate over residues 96-105 (GSDEEDEEWP). S97 carries the post-translational modification Phosphoserine. T155 carries the post-translational modification Phosphothreonine. Phosphoserine occurs at positions 166 and 413.

The protein belongs to the bystin family. Binds trophinin, tastin and cytokeratins.

The protein resides in the cytoplasm. It is found in the nucleus. The protein localises to the nucleolus. Required for processing of 20S pre-rRNA precursor and biogenesis of 40S ribosomal subunits. In Rattus norvegicus (Rat), this protein is Bystin.